The following is a 1418-amino-acid chain: Ankyrin repeat and fibronectin type-III domain-containing protein 1 (1418 aa).

Residues 119-236 (RDSVCSLPPP…DRGETPSLSE (118 aa)) are disordered. Positions 144-154 (PENTSINLSQC) are enriched in polar residues. Over residues 171–186 (SASPTSSTPLRTTSTP) the composition is skewed to low complexity. The segment covering 223-236 (LRDHDRGETPSLSE) has biased composition (basic and acidic residues). 2 ANK repeats span residues 419–450 (QSSE…ELDL) and 456–485 (EGLT…KESP). Positions 556 to 652 (APLMVRLSVT…LSQPPSAVPS (97 aa)) constitute a Fibronectin type-III domain. A highly conserved peptide sequence region spans residues 893-900 (GLYLGYLK). Disordered stretches follow at residues 1134 to 1179 (VQKN…EVFL), 1321 to 1343 (LETP…YRQP), and 1361 to 1418 (KTSP…SSTL). A compositionally biased stretch (polar residues) spans 1136-1146 (KNDSTSSNTDY). Over residues 1407 to 1418 (NEQVSEILSSTL) the composition is skewed to polar residues.

Required for vestibular-related functions. The protein is Ankyrin repeat and fibronectin type-III domain-containing protein 1 (ankfn1) of Danio rerio (Zebrafish).